The sequence spans 200 residues: Holliday junction branch migration complex subunit RuvA (200 aa).

The interval 1-64 (MITSIQGTLV…EDSQTLYGFA (64 aa)) is domain I. Positions 65-144 (SPAERDFFRL…ATGAAPGLAT (80 aa)) are domain II. The interval 145-151 (QPAAAAS) is flexible linker. Residues 152-200 (PGASAHRDAVAALVALGYRSADADEAVRRASLALGEAATTESLIKKALS) form a domain III region.

This sequence belongs to the RuvA family. Homotetramer. Forms an RuvA(8)-RuvB(12)-Holliday junction (HJ) complex. HJ DNA is sandwiched between 2 RuvA tetramers; dsDNA enters through RuvA and exits via RuvB. An RuvB hexamer assembles on each DNA strand where it exits the tetramer. Each RuvB hexamer is contacted by two RuvA subunits (via domain III) on 2 adjacent RuvB subunits; this complex drives branch migration. In the full resolvosome a probable DNA-RuvA(4)-RuvB(12)-RuvC(2) complex forms which resolves the HJ.

It localises to the cytoplasm. Functionally, the RuvA-RuvB-RuvC complex processes Holliday junction (HJ) DNA during genetic recombination and DNA repair, while the RuvA-RuvB complex plays an important role in the rescue of blocked DNA replication forks via replication fork reversal (RFR). RuvA specifically binds to HJ cruciform DNA, conferring on it an open structure. The RuvB hexamer acts as an ATP-dependent pump, pulling dsDNA into and through the RuvAB complex. HJ branch migration allows RuvC to scan DNA until it finds its consensus sequence, where it cleaves and resolves the cruciform DNA. This chain is Holliday junction branch migration complex subunit RuvA, found in Opitutus terrae (strain DSM 11246 / JCM 15787 / PB90-1).